The following is a 357-amino-acid chain: 3-dehydroquinate synthase (357 aa).

NAD(+) is bound by residues 69 to 74, 103 to 107, 127 to 128, lysine 140, and lysine 149; these read DGEKNK, GVIGD, and TT. Residues glutamate 182, histidine 245, and histidine 262 each coordinate Zn(2+).

The protein belongs to the sugar phosphate cyclases superfamily. Dehydroquinate synthase family. Requires Co(2+) as cofactor. Zn(2+) is required as a cofactor. The cofactor is NAD(+).

Its subcellular location is the cytoplasm. The enzyme catalyses 7-phospho-2-dehydro-3-deoxy-D-arabino-heptonate = 3-dehydroquinate + phosphate. It functions in the pathway metabolic intermediate biosynthesis; chorismate biosynthesis; chorismate from D-erythrose 4-phosphate and phosphoenolpyruvate: step 2/7. In terms of biological role, catalyzes the conversion of 3-deoxy-D-arabino-heptulosonate 7-phosphate (DAHP) to dehydroquinate (DHQ). This chain is 3-dehydroquinate synthase, found in Shewanella denitrificans (strain OS217 / ATCC BAA-1090 / DSM 15013).